Here is a 270-residue protein sequence, read N- to C-terminus: Regulator of G-protein signaling rgs-10 (270 aa).

Positions 135-252 constitute an RGS domain; sequence SPETLAASEY…LEDPLYLDLV (118 aa).

Shown to have a role in viability and embryogenesis. This Caenorhabditis elegans protein is Regulator of G-protein signaling rgs-10 (rgs-10).